Here is a 72-residue protein sequence, read N- to C-terminus: Small ribosomal subunit protein bS18 (72 aa).

It belongs to the bacterial ribosomal protein bS18 family. Part of the 30S ribosomal subunit. Forms a tight heterodimer with protein bS6.

In terms of biological role, binds as a heterodimer with protein bS6 to the central domain of the 16S rRNA, where it helps stabilize the platform of the 30S subunit. The protein is Small ribosomal subunit protein bS18 of Francisella tularensis subsp. holarctica (strain OSU18).